A 179-amino-acid polypeptide reads, in one-letter code: Large ribosomal subunit protein uL6 (179 aa).

The protein belongs to the universal ribosomal protein uL6 family. In terms of assembly, part of the 50S ribosomal subunit.

Functionally, this protein binds to the 23S rRNA, and is important in its secondary structure. It is located near the subunit interface in the base of the L7/L12 stalk, and near the tRNA binding site of the peptidyltransferase center. This chain is Large ribosomal subunit protein uL6, found in Solidesulfovibrio magneticus (strain ATCC 700980 / DSM 13731 / RS-1) (Desulfovibrio magneticus).